The chain runs to 468 residues: 3-isopropylmalate dehydratase large subunit (468 aa).

Positions 346, 406, and 409 each coordinate [4Fe-4S] cluster.

Belongs to the aconitase/IPM isomerase family. LeuC type 1 subfamily. In terms of assembly, heterodimer of LeuC and LeuD. It depends on [4Fe-4S] cluster as a cofactor.

It carries out the reaction (2R,3S)-3-isopropylmalate = (2S)-2-isopropylmalate. Its pathway is amino-acid biosynthesis; L-leucine biosynthesis; L-leucine from 3-methyl-2-oxobutanoate: step 2/4. Catalyzes the isomerization between 2-isopropylmalate and 3-isopropylmalate, via the formation of 2-isopropylmaleate. The protein is 3-isopropylmalate dehydratase large subunit of Pseudoalteromonas atlantica (strain T6c / ATCC BAA-1087).